A 254-amino-acid polypeptide reads, in one-letter code: Decaprenylphosphoryl-2-keto-beta-D-erythro-pentose reductase (254 aa).

An NAD(+)-binding site is contributed by aspartate 67. The Proton acceptor role is filled by tyrosine 160. Residue lysine 164 participates in NAD(+) binding.

It belongs to the short-chain dehydrogenases/reductases (SDR) family. In terms of assembly, interacts with DprE1 to form an epimerase complex.

The protein localises to the periplasm. The enzyme catalyses trans,octa-cis-decaprenylphospho-beta-D-arabinofuranose + NAD(+) = trans,octa-cis-decaprenylphospho-beta-D-erythro-pentofuranosid-2-ulose + NADH + H(+). Its pathway is cell wall biogenesis; cell wall polysaccharide biosynthesis. Component of the DprE1-DprE2 complex that catalyzes the 2-step epimerization of decaprenyl-phospho-ribose (DPR) to decaprenyl-phospho-arabinose (DPA), a key precursor that serves as the arabinose donor required for the synthesis of cell-wall arabinans. DprE1 catalyzes the first step of epimerization, namely FAD-dependent oxidation of the C2' hydroxyl of DPR to yield the keto intermediate decaprenyl-phospho-2'-keto-D-arabinose (DPX). The intermediate DPX is then transferred to DprE2 subunit of the epimerase complex, most probably through a 'substrate channel' at the interface of DprE1-DprE2 complex. DprE2 then catalyzes the second step of epimerization, the NAD(+)-dependent reduction of DPX that leads to the formation of DPA. The sequence is that of Decaprenylphosphoryl-2-keto-beta-D-erythro-pentose reductase from Mycobacterium bovis (strain ATCC BAA-935 / AF2122/97).